A 156-amino-acid chain; its full sequence is ATP synthase subunit b (156 aa).

Residues 12–32 (VAFFIFVLFCMKFVWPPVIAA) traverse the membrane as a helical segment.

Belongs to the ATPase B chain family. F-type ATPases have 2 components, F(1) - the catalytic core - and F(0) - the membrane proton channel. F(1) has five subunits: alpha(3), beta(3), gamma(1), delta(1), epsilon(1). F(0) has three main subunits: a(1), b(2) and c(10-14). The alpha and beta chains form an alternating ring which encloses part of the gamma chain. F(1) is attached to F(0) by a central stalk formed by the gamma and epsilon chains, while a peripheral stalk is formed by the delta and b chains.

The protein resides in the cell inner membrane. In terms of biological role, f(1)F(0) ATP synthase produces ATP from ADP in the presence of a proton or sodium gradient. F-type ATPases consist of two structural domains, F(1) containing the extramembraneous catalytic core and F(0) containing the membrane proton channel, linked together by a central stalk and a peripheral stalk. During catalysis, ATP synthesis in the catalytic domain of F(1) is coupled via a rotary mechanism of the central stalk subunits to proton translocation. Its function is as follows. Component of the F(0) channel, it forms part of the peripheral stalk, linking F(1) to F(0). The protein is ATP synthase subunit b of Pseudomonas paraeruginosa (strain DSM 24068 / PA7) (Pseudomonas aeruginosa (strain PA7)).